Reading from the N-terminus, the 223-residue chain is MAELKSLSGDSYLALSHSYTATGHAYAAARGPETTRGFGASGPGGDLPAAPASRVPAATVESSGEQSGDEDEAFERRRRRRGSGVAVDARRRPREQRSLRLSINARERRRMHDLNDALDGLRAVIPYAHSPSVRKLSKIATLLLAKNYILMQAQALEEMRRLVAYLNQGQGLAAPVAAAPLTPFGQAAIYPFSAGTALGPCPDKCATFSGSPSALCKHCGEKP.

The disordered stretch occupies residues Pro-32–Pro-93. A bHLH domain is found at Ser-98–Gln-152.

Expressed in brain and retina.

Its subcellular location is the nucleus. Its function is as follows. May function as transcriptional repressor. May modulate the expression of genes required for the differentiation and/or maintenance of pancreatic and neuronal cell types. May be important for rod bipolar cell maturation. The polypeptide is Class E basic helix-loop-helix protein 23 (Bhlhe23) (Mus musculus (Mouse)).